A 468-amino-acid chain; its full sequence is 6-phosphogluconate dehydrogenase, decarboxylating (468 aa).

Residues 10-15, 33-35, 74-76, and N102 each bind NADP(+); these read GMAVMG, NRS, and VKA. Substrate is bound by residues N102 and 128-130; that span reads SGG. K183 functions as the Proton acceptor in the catalytic mechanism. Position 186-187 (186-187) interacts with substrate; the sequence is HN. The Proton donor role is filled by E190. Y191, K260, R287, R445, and H451 together coordinate substrate.

Belongs to the 6-phosphogluconate dehydrogenase family. In terms of assembly, homodimer.

It catalyses the reaction 6-phospho-D-gluconate + NADP(+) = D-ribulose 5-phosphate + CO2 + NADPH. Its pathway is carbohydrate degradation; pentose phosphate pathway; D-ribulose 5-phosphate from D-glucose 6-phosphate (oxidative stage): step 3/3. Functionally, catalyzes the oxidative decarboxylation of 6-phosphogluconate to ribulose 5-phosphate and CO(2), with concomitant reduction of NADP to NADPH. This chain is 6-phosphogluconate dehydrogenase, decarboxylating (gnd), found in Klebsiella pneumoniae.